The sequence spans 490 residues: Betaine aldehyde dehydrogenase (490 aa).

K(+)-binding residues include Ser26, Ile27, and Asp93. 150–152 (GAW) provides a ligand contact to NAD(+). The active-site Charge relay system is the Lys162. An NAD(+)-binding site is contributed by 176-179 (KPSE). Val180 provides a ligand contact to K(+). 230–233 (GTVT) is a binding site for NAD(+). Position 246 (Leu246) interacts with K(+). Residue Glu252 is the Proton acceptor of the active site. Gly254, Cys286, and Glu387 together coordinate NAD(+). Catalysis depends on Cys286, which acts as the Nucleophile. Cys286 is subject to Cysteine sulfenic acid (-SOH). Lys457 and Gly460 together coordinate K(+). Glu464 functions as the Charge relay system in the catalytic mechanism.

Belongs to the aldehyde dehydrogenase family. Dimer of dimers. K(+) serves as cofactor.

The catalysed reaction is betaine aldehyde + NAD(+) + H2O = glycine betaine + NADH + 2 H(+). It functions in the pathway amine and polyamine biosynthesis; betaine biosynthesis via choline pathway; betaine from betaine aldehyde: step 1/1. Its function is as follows. Involved in the biosynthesis of the osmoprotectant glycine betaine. Catalyzes the irreversible oxidation of betaine aldehyde to the corresponding acid. The polypeptide is Betaine aldehyde dehydrogenase (Ectopseudomonas mendocina (strain ymp) (Pseudomonas mendocina)).